Consider the following 393-residue polypeptide: Prokineticin receptor 1 (393 aa).

Topologically, residues 1-62 (METTMGFMDD…TNSRTFFAAK (62 aa)) are extracellular. Asn-11, Asn-14, and Asn-36 each carry an N-linked (GlcNAc...) asparagine glycan. The chain crosses the membrane as a helical span at residues 63 to 83 (IVIGMALVGIMLVCGIGNFIF). Residues 84-98 (IAALVRYKKLRNLTN) lie on the Cytoplasmic side of the membrane. A helical transmembrane segment spans residues 99 to 119 (LLIANLAISDFLVAIVCCPFE). Residues 120–146 (MDYYVVRQLSWEHGHVLCTSVNYLRTV) lie on the Extracellular side of the membrane. Cys-137 and Cys-217 are oxidised to a cystine. A helical membrane pass occupies residues 147-167 (SLYVSTNALLAIAIDRYLAIV). The Cytoplasmic portion of the chain corresponds to 168–180 (HPLRPRMKCQTAT). A helical membrane pass occupies residues 181–201 (GLIALVWTVSILIAIPSAYFT). The Extracellular portion of the chain corresponds to 202–232 (TETVLVIVKSQEKIFCGQIWPVDQQLYYKSY). The helical transmembrane segment at 233-253 (FLFIFGIEFVGPVVTMTLCYA) threads the bilayer. Over 254–282 (RISRELWFKAVPGFQTEQIRKRLRCRRKT) the chain is Cytoplasmic. Residues 283–303 (VLVLMCILTAYVLCWAPFYGF) form a helical membrane-spanning segment. Residues 304 to 322 (TIVRDFFPTVFVKEKHYLT) are Extracellular-facing. A helical transmembrane segment spans residues 323-343 (AFYIVECIAMSNSMINTLCFV). Residues 344–393 (TVKNDTVKYFKKIMLLHWKASYNGGKSSADLDLKTIGMPATEEVDCIRLK) lie on the Cytoplasmic side of the membrane.

This sequence belongs to the G-protein coupled receptor 1 family. As to expression, localizes to glandular epithelium, stroma and vascular endothelial cells of first trimester decidua (at protein level). Up-regulated in first trimester decidua when compared with non-pregnant endometrium. Expressed in the stomach, throughout the small intestine, colon, rectum, thyroid gland, pituitary gland, salivary gland, adrenal gland, testis, ovary, brain, spleen, prostate and pancreas.

It localises to the cell membrane. In terms of biological role, receptor for prokineticin 1. Exclusively coupled to the G(q) subclass of heteromeric G proteins. Activation leads to mobilization of calcium, stimulation of phosphoinositide turnover and activation of p44/p42 mitogen-activated protein kinase. May play a role during early pregnancy. The chain is Prokineticin receptor 1 (PROKR1) from Homo sapiens (Human).